The chain runs to 116 residues: Glycine-rich protein 3 short isoform (116 aa).

A signal peptide spans 1 to 24 (MASKTLLLLGLFAFLFIVSEMAAA). The tract at residues 27 to 83 (VKSESEETVKPEQHGGGFGDNGGGRYQGGGGHGGHGGGGYQGGGGRYQGGGGRQGGG) is disordered. Over residues 29 to 39 (SESEETVKPEQ) the composition is skewed to basic and acidic residues. Residues 40-83 (HGGGFGDNGGGRYQGGGGHGGHGGGGYQGGGGRYQGGGGRQGGG) are compositionally biased toward gly residues. 5 consecutive repeat copies span residues 54 to 59 (GGGGHG), 62 to 67 (GGGGYQ), 68 to 73 (GGGGRY), 75 to 80 (GGGGRQ), and 81 to 86 (GGGGSY). The tract at residues 54 to 86 (GGGGHGGHGGGGYQGGGGRYQGGGGRQGGGGSY) is 5 X 6 AA tandem repeats of G-G-G-G-[HYRS]-[GYQ].

It belongs to the GRP family. Interacts with WAK1 (via the extracellular domain). Component of a 500 kDa complex, composed of GRP3 or GRP3-S, WAK1 and KAPP.

It is found in the secreted. Its subcellular location is the extracellular space. The protein resides in the extracellular matrix. Functionally, regulates the function of the receptor protein kinase WAK1. This is Glycine-rich protein 3 short isoform (GRP3S) from Arabidopsis thaliana (Mouse-ear cress).